A 194-amino-acid polypeptide reads, in one-letter code: Translation machinery-associated protein 22 (194 aa).

The SUI1 domain maps to 102 to 173; that stretch reads VQIKRVERNK…DVKEWLLELY (72 aa).

The protein belongs to the DENR family. In terms of assembly, interacts with the 40S ribosomal subunit.

Its subcellular location is the cytoplasm. The chain is Translation machinery-associated protein 22 (tma22) from Aspergillus fumigatus (strain ATCC MYA-4609 / CBS 101355 / FGSC A1100 / Af293) (Neosartorya fumigata).